The sequence spans 506 residues: Photosystem II CP47 reaction center protein (506 aa).

The next 6 helical transmembrane spans lie at 21–36, 101–115, 140–156, 203–218, 237–252, and 457–472; these read SVHI…WAGS, ILFS…IWHW, GIHL…FGAF, IAAG…FHLS, VLSS…AFVV, and SFAL…HGAR.

It belongs to the PsbB/PsbC family. PsbB subfamily. PSII is composed of 1 copy each of membrane proteins PsbA, PsbB, PsbC, PsbD, PsbE, PsbF, PsbH, PsbI, PsbJ, PsbK, PsbL, PsbM, PsbT, PsbX, PsbY, PsbZ, Psb30/Ycf12, at least 3 peripheral proteins of the oxygen-evolving complex and a large number of cofactors. It forms dimeric complexes. The cofactor is Binds multiple chlorophylls. PSII binds additional chlorophylls, carotenoids and specific lipids..

The protein resides in the plastid. The protein localises to the chloroplast thylakoid membrane. In terms of biological role, one of the components of the core complex of photosystem II (PSII). It binds chlorophyll and helps catalyze the primary light-induced photochemical processes of PSII. PSII is a light-driven water:plastoquinone oxidoreductase, using light energy to abstract electrons from H(2)O, generating O(2) and a proton gradient subsequently used for ATP formation. The polypeptide is Photosystem II CP47 reaction center protein (Cucumis sativus (Cucumber)).